The sequence spans 250 residues: Proteasome subunit alpha type-7-A (250 aa).

Residue lysine 62 forms a Glycyl lysine isopeptide (Lys-Gly) (interchain with G-Cter in ubiquitin) linkage.

This sequence belongs to the peptidase T1A family. In terms of assembly, component of the 20S core complex of the 26S proteasome. The 26S proteasome is composed of a core protease (CP), known as the 20S proteasome, capped at one or both ends by the 19S regulatory particle (RP/PA700). The 20S proteasome core is composed of 28 subunits that are arranged in four stacked rings, resulting in a barrel-shaped structure. The two end rings are each formed by seven alpha subunits, and the two central rings are each formed by seven beta subunits. The catalytic chamber with the active sites is on the inside of the barrel. Interacts with KIN10 and KIN11 SnRK subunits, and with the SKP1A/ASK1 subunit of the SCF E3 ubiquitin ligase complex. Expressed in roots, leaves and flowers.

Its subcellular location is the cytoplasm. The protein resides in the nucleus. Functionally, the proteasome is a multicatalytic proteinase complex which is characterized by its ability to cleave peptides with Arg, Phe, Tyr, Leu, and Glu adjacent to the leaving group at neutral or slightly basic pH. The proteasome has an ATP-dependent proteolytic activity. Mediates the association of the SCF(TIR1) E3 ubiquitin ligase complex with the proteasome. This is Proteasome subunit alpha type-7-A (PAD1) from Arabidopsis thaliana (Mouse-ear cress).